Reading from the N-terminus, the 153-residue chain is Transcriptional repressor NrdR (153 aa).

A disordered region spans residues 1 to 20 (MKCPFCNSADTRVKNSRHSD). A zinc finger lies at 3 to 34 (CPFCNSADTRVKNSRHSDDNMSVRRRRLCEVC). The span at 11–20 (TRVKNSRHSD) shows a compositional bias: basic and acidic residues. An ATP-cone domain is found at 49–139 (IMVLKKDGRM…VYMDFSDADD (91 aa)).

The protein belongs to the NrdR family. It depends on Zn(2+) as a cofactor.

Negatively regulates transcription of bacterial ribonucleotide reductase nrd genes and operons by binding to NrdR-boxes. The protein is Transcriptional repressor NrdR of Anaplasma phagocytophilum (strain HZ).